The following is a 151-amino-acid chain: Putative pre-16S rRNA nuclease (151 aa).

It belongs to the YqgF nuclease family.

The protein localises to the cytoplasm. Functionally, could be a nuclease involved in processing of the 5'-end of pre-16S rRNA. The protein is Putative pre-16S rRNA nuclease of Gloeothece citriformis (strain PCC 7424) (Cyanothece sp. (strain PCC 7424)).